The following is a 176-amino-acid chain: Large ribosomal subunit protein uL6 (176 aa).

This sequence belongs to the universal ribosomal protein uL6 family. Part of the 50S ribosomal subunit.

Functionally, this protein binds to the 23S rRNA, and is important in its secondary structure. It is located near the subunit interface in the base of the L7/L12 stalk, and near the tRNA binding site of the peptidyltransferase center. The chain is Large ribosomal subunit protein uL6 from Lactobacillus delbrueckii subsp. bulgaricus (strain ATCC 11842 / DSM 20081 / BCRC 10696 / JCM 1002 / NBRC 13953 / NCIMB 11778 / NCTC 12712 / WDCM 00102 / Lb 14).